The chain runs to 137 residues: Large ribosomal subunit protein eL28 (137 aa).

The residue at position 2 (Ser-2) is an N-acetylserine. Glycyl lysine isopeptide (Lys-Gly) (interchain with G-Cter in SUMO2) cross-links involve residues Lys-58 and Lys-65. The residue at position 115 (Ser-115) is a Phosphoserine.

This sequence belongs to the eukaryotic ribosomal protein eL28 family. In terms of assembly, component of the large ribosomal subunit.

The protein localises to the cytoplasm. Component of the large ribosomal subunit. The ribosome is a large ribonucleoprotein complex responsible for the synthesis of proteins in the cell. The chain is Large ribosomal subunit protein eL28 (RPL28) from Bos taurus (Bovine).